Reading from the N-terminus, the 643-residue chain is Macrolide export ATP-binding/permease protein MacB (643 aa).

Residues isoleucine 4–arginine 242 form the ABC transporter domain. Glycine 40–serine 47 contributes to the ATP binding site. 4 helical membrane passes run leucine 269–glycine 289, isoleucine 523–valine 543, isoleucine 572–isoleucine 592, and valine 603–phenylalanine 623.

The protein belongs to the ABC transporter superfamily. Macrolide exporter (TC 3.A.1.122) family. Homodimer. Part of the tripartite efflux system MacAB-TolC, which is composed of an inner membrane transporter, MacB, a periplasmic membrane fusion protein, MacA, and an outer membrane component, TolC. The complex forms a large protein conduit and can translocate molecules across both the inner and outer membranes. Interacts with MacA.

The protein localises to the cell inner membrane. Its function is as follows. Part of the tripartite efflux system MacAB-TolC. MacB is a non-canonical ABC transporter that contains transmembrane domains (TMD), which form a pore in the inner membrane, and an ATP-binding domain (NBD), which is responsible for energy generation. Confers resistance against macrolides. This is Macrolide export ATP-binding/permease protein MacB from Mannheimia succiniciproducens (strain KCTC 0769BP / MBEL55E).